A 59-amino-acid polypeptide reads, in one-letter code: Large ribosomal subunit protein uL30 (59 aa).

It belongs to the universal ribosomal protein uL30 family. In terms of assembly, part of the 50S ribosomal subunit.

This is Large ribosomal subunit protein uL30 from Alkaliphilus oremlandii (strain OhILAs) (Clostridium oremlandii (strain OhILAs)).